Reading from the N-terminus, the 378-residue chain is Anhydro-N-acetylmuramic acid kinase (378 aa).

An ATP-binding site is contributed by 23–30 (GTSMDGAD).

This sequence belongs to the anhydro-N-acetylmuramic acid kinase family.

It carries out the reaction 1,6-anhydro-N-acetyl-beta-muramate + ATP + H2O = N-acetyl-D-muramate 6-phosphate + ADP + H(+). Its pathway is amino-sugar metabolism; 1,6-anhydro-N-acetylmuramate degradation. It functions in the pathway cell wall biogenesis; peptidoglycan recycling. Its function is as follows. Catalyzes the specific phosphorylation of 1,6-anhydro-N-acetylmuramic acid (anhMurNAc) with the simultaneous cleavage of the 1,6-anhydro ring, generating MurNAc-6-P. Is required for the utilization of anhMurNAc either imported from the medium or derived from its own cell wall murein, and thus plays a role in cell wall recycling. This is Anhydro-N-acetylmuramic acid kinase from Bordetella bronchiseptica (strain ATCC BAA-588 / NCTC 13252 / RB50) (Alcaligenes bronchisepticus).